Consider the following 96-residue polypeptide: ESAT-6-like protein EsxH (96 aa).

H14, H70, H76, and E77 together coordinate Zn(2+).

This sequence belongs to the WXG100 family. ESAT-6 subfamily. In terms of assembly, forms a tight 1:1 complex with EsxG. When it is complexed to EsxG, interacts directly with host HGS/HRS.

The protein resides in the secreted. Functionally, esxH, in complex with EsxG, disrupts ESCRT function and impairs host phagosome maturation, thereby promoting intracellular bacterial growth. The complex acts by interacting, via EsxH, with the host hepatocyte growth factor-regulated tyrosine kinase substrate (HGS/HRS), a component of the ESCRT machinery. This chain is ESAT-6-like protein EsxH, found in Mycobacterium tuberculosis (strain ATCC 25618 / H37Rv).